A 165-amino-acid chain; its full sequence is Large ribosomal subunit protein uL10 (165 aa).

This sequence belongs to the universal ribosomal protein uL10 family. Part of the ribosomal stalk of the 50S ribosomal subunit. The N-terminus interacts with L11 and the large rRNA to form the base of the stalk. The C-terminus forms an elongated spine to which L12 dimers bind in a sequential fashion forming a multimeric L10(L12)X complex.

In terms of biological role, forms part of the ribosomal stalk, playing a central role in the interaction of the ribosome with GTP-bound translation factors. The sequence is that of Large ribosomal subunit protein uL10 (rplJ) from Halalkalibacterium halodurans (strain ATCC BAA-125 / DSM 18197 / FERM 7344 / JCM 9153 / C-125) (Bacillus halodurans).